The chain runs to 704 residues: Cystathionine beta-synthase cbs-1 (704 aa).

Pyridoxal 5'-phosphate contacts are provided by residues asparagine 454, 562-566 (GTGGT), and serine 652.

Belongs to the cysteine synthase/cystathionine beta-synthase family. As to quaternary structure, monomer. In terms of assembly, does not bind pyridoxal 5'-phosphate, PLP; which may explain why this isoform has virtually undetectable catalytic activity. Pyridoxal 5'-phosphate serves as cofactor.

The protein resides in the cytoplasm. It carries out the reaction L-homocysteine + L-serine = L,L-cystathionine + H2O. It participates in amino-acid biosynthesis; L-cysteine biosynthesis; L-cysteine from L-homocysteine and L-serine: step 1/2. Functionally, hydro-lyase catalyzing the first step of the transsulfuration pathway, where the hydroxyl group of L-serine is displaced by L-homocysteine in a beta-replacement reaction to form L-cystathionine, the precursor of L-cysteine. Plays a role in maintaining homocysteine homeostasis. Involved in cold-induced somatic longevity mediated by prostaglandin E2 (PGE2) signals from adult germ cells, perhaps acting via a role in the production of hydrogen sulfide (H2S). Required for normal development. The sequence is that of Cystathionine beta-synthase cbs-1 from Caenorhabditis elegans.